We begin with the raw amino-acid sequence, 35 residues long: PTEN upstream open reading frame MP31 (35 aa).

Interacts with lactate dehydrogenases LDHA and LDHB; interaction with mitochondrial LDH leads to inhibition of lactate dehydrogenase activity, preventing conversion of lactate to pyruvate. As to expression, detected in brain, kidney and liver (at protein level).

It localises to the mitochondrion. Inhibits lactate dehydrogenase (LDH)-mediated conversion of lactate to pyruvate in mitochondria by competing with mitochondrial LDH for binding to NAD(+). Also inhibits cellular lactate utilization. This Mus musculus (Mouse) protein is PTEN upstream open reading frame MP31.